Consider the following 359-residue polypeptide: Maleylacetate reductase 2 (359 aa).

The protein belongs to the iron-containing alcohol dehydrogenase family. As to quaternary structure, homodimer.

The enzyme catalyses 3-oxoadipate + NAD(+) = maleylacetate + NADH + H(+). It carries out the reaction 3-oxoadipate + NADP(+) = maleylacetate + NADPH + H(+). It functions in the pathway aromatic compound metabolism; 3-chlorocatechol degradation. Its activity is regulated as follows. Inhibited by p-chloromercuribenzoate and by 3-oxoadipate, and, in a temperature-dependent manner, by manganese. In terms of biological role, plays a major role in the degradation of chloroaromatic compounds by channeling maleylacetate and some of its substituted derivatives into the 3-oxoadipate pathway. This enzyme converts maleylacetate and 2-chloromaleylacetate with similar efficiencies. NADH is preferred to NADPH as the cosubstrate. The sequence is that of Maleylacetate reductase 2 (tfdFII) from Cupriavidus pinatubonensis (strain JMP 134 / LMG 1197) (Cupriavidus necator (strain JMP 134)).